Consider the following 476-residue polypeptide: ATP synthase subunit beta (476 aa).

153-160 (GGAGVGKT) provides a ligand contact to ATP.

Belongs to the ATPase alpha/beta chains family. F-type ATPases have 2 components, CF(1) - the catalytic core - and CF(0) - the membrane proton channel. CF(1) has five subunits: alpha(3), beta(3), gamma(1), delta(1), epsilon(1). CF(0) has three main subunits: a(1), b(2) and c(9-12). The alpha and beta chains form an alternating ring which encloses part of the gamma chain. CF(1) is attached to CF(0) by a central stalk formed by the gamma and epsilon chains, while a peripheral stalk is formed by the delta and b chains.

It is found in the cell membrane. The catalysed reaction is ATP + H2O + 4 H(+)(in) = ADP + phosphate + 5 H(+)(out). In terms of biological role, produces ATP from ADP in the presence of a proton gradient across the membrane. The catalytic sites are hosted primarily by the beta subunits. This is ATP synthase subunit beta from Latilactobacillus sakei subsp. sakei (strain 23K) (Lactobacillus sakei subsp. sakei).